The primary structure comprises 783 residues: E3 UFM1-protein ligase 1 homolog (783 aa).

The interval 406–476 (TLGTTHDADE…DAVQQSANSS (71 aa)) is disordered. A compositionally biased stretch (basic residues) spans 446–457 (KSTKKHQRGRAA).

This sequence belongs to the UFL1 family.

Its function is as follows. E3 UFM1-protein ligase that mediates ufmylation of target proteins. This Drosophila grimshawi (Hawaiian fruit fly) protein is E3 UFM1-protein ligase 1 homolog.